The chain runs to 208 residues: DNA-binding protein HupB (208 aa).

The tract at residues 1 to 90 (MNKAELIDVL…PGAQFKAVIS (90 aa)) is bacterial histone-like domain. Residue lysine 3 is modified to N6-acetyllysine. N6-acetyllysine; alternate; partial is present on lysine 3. Residue lysine 3 is modified to N6-methyllysine; alternate; partial. At lysine 72 the chain carries N6-acetyllysine; partial. Residue lysine 86 is modified to N6-methyllysine; partial. Positions 92–208 (AQKLPADGPA…KKAPAKKGRR (117 aa)) are C-terminus, required for nucleoid localization. N6-acetyllysine; alternate; partial is present on residues lysine 94 and lysine 103. 2 positions are modified to N6-methyllysine; alternate; partial: lysine 94 and lysine 103. Residues 96–208 (PADGPAVKRG…KKAPAKKGRR (113 aa)) form a disordered region. The segment at 101 to 205 (AVKRGVTAGP…AAAKKAPAKK (105 aa)) is degenerate repeats region. Residues 113–208 (KAAKKAPAKK…KKAPAKKGRR (96 aa)) show a composition bias toward basic residues. Residues lysine 116, lysine 136, lysine 149, and lysine 168 each carry the N6-acetyllysine modification.

Belongs to the bacterial histone-like protein family. Long actinobacterial subfamily. In terms of assembly, may form oligomers. Interacts with RNase E (rne). In terms of processing, in addition to the identifed modifications, is also methylated on one of Arg-53; Arg-54 or Arg-55.

The protein resides in the cytoplasm. Its subcellular location is the nucleoid. It localises to the secreted. It is found in the cell wall. The catalysed reaction is 4 Fe(2+) + O2 + 4 H(+) = 4 Fe(3+) + 2 H2O. With respect to regulation, trans-stilbene derivative 4,4'-[(E)-ethene-1,2 diylbis({5[(phenylcarbonyl)amino]benzene-2,1-diyl}sulfonylimino)] dibenzoic acid (SD1) inhibits DNA binding at 50 uM. SD1 does not inhibit growth in a range of 3-1600 uM. A nucleoid-associated protein (NAP) that plays a crucial role in local chromosome architecture. Helps organize newly replicated oriC proximal regions and contributes to the timing of replication initiation and coordinating replication with chromosome segregation. There are between 30,000-60,000 molecules in a log phase cell; the protein-DNA complex is dynamic during the cell cycle, with more complexes near the cell ends. Binds irregularly along the chromosome with higher binding near the origin of replication (oriC) and lowest binding near the chromosome terminus (ter). Binds DNA non-sequence specifically via both its N- and C-terminal domains with high affinity, has no preference for linear or supercoiled DNA. Binds four-way junction DNA. Represses T7 RNA polymerase in vitro. The C-terminal domain enhances DNA end-joining in vitro in the presence of T4 DNA ligase. RNase E and HupB jointly contribute to cellular adaptation to changing growth conditions and survival during antibiotic treatment. In terms of biological role, has ferroxidase activity, converts Fe(2+) into Fe(3+). Binds Fe(3+) but not Fe(2+); prevents the generation of hydroxyl radicals by the Fenton reaction and thus protects DNA from damage. May function in iron storage. Its function is as follows. Plays a role in epigenetic resistance to antibiotics. Growth on levels of isoniazid (INH) near the minimal inhibitory concentration (MIC) kills most bacteria. The surviving cells grow as either large or small colony variants (SCV), evidence suggest SCVs are associated with persistent infections. Mutating this protein leads to specific loss of SCVs. Functionally, may play a role in cell wall assembly. This chain is DNA-binding protein HupB, found in Mycolicibacterium smegmatis (strain ATCC 700084 / mc(2)155) (Mycobacterium smegmatis).